Consider the following 201-residue polypeptide: LexA repressor (201 aa).

The segment at residues 28-48 (LREIAAKLGISGTLGVMKHLE) is a DNA-binding region (H-T-H motif). Active-site for autocatalytic cleavage activity residues include serine 120 and lysine 157.

Belongs to the peptidase S24 family. Homodimer.

It carries out the reaction Hydrolysis of Ala-|-Gly bond in repressor LexA.. Its function is as follows. Represses a number of genes involved in the response to DNA damage (SOS response), including recA and lexA. In the presence of single-stranded DNA, RecA interacts with LexA causing an autocatalytic cleavage which disrupts the DNA-binding part of LexA, leading to derepression of the SOS regulon and eventually DNA repair. The sequence is that of LexA repressor from Geobacter sp. (strain M21).